A 580-amino-acid polypeptide reads, in one-letter code: Adenine deaminase (580 aa).

This sequence belongs to the metallo-dependent hydrolases superfamily. Adenine deaminase family. It depends on Mn(2+) as a cofactor.

The enzyme catalyses adenine + H2O + H(+) = hypoxanthine + NH4(+). The polypeptide is Adenine deaminase (Listeria monocytogenes serovar 1/2a (strain ATCC BAA-679 / EGD-e)).